We begin with the raw amino-acid sequence, 489 residues long: Probable serine protease EDA2 (489 aa).

Residues 1–25 (MSLEFGFILINIFTAIVSFSTLSHA) form the signal peptide. Asparagine 35, asparagine 51, and asparagine 162 each carry an N-linked (GlcNAc...) asparagine glycan. Serine 178 serves as the catalytic Charge relay system. Asparagine 253, asparagine 293, asparagine 365, and asparagine 406 each carry an N-linked (GlcNAc...) asparagine glycan. Aspartate 410 serves as the catalytic Charge relay system. Asparagine 419 carries N-linked (GlcNAc...) asparagine glycosylation. Histidine 436 serves as the catalytic Charge relay system. An N-linked (GlcNAc...) asparagine glycan is attached at asparagine 456.

It belongs to the peptidase S28 family.

The protein localises to the secreted. May be involved in a proteolytic pathway controlling the nuclear division phase of megagametogenesis. In Arabidopsis thaliana (Mouse-ear cress), this protein is Probable serine protease EDA2 (EDA2).